The chain runs to 148 residues: Large ribosomal subunit protein bL9 (148 aa).

This sequence belongs to the bacterial ribosomal protein bL9 family.

In terms of biological role, binds to the 23S rRNA. The sequence is that of Large ribosomal subunit protein bL9 from Pseudomonas fluorescens (strain Pf0-1).